Consider the following 111-residue polypeptide: Putative splicing factor C222.18 (111 aa).

The RRM domain maps to 18–95 (HTLYIRNFGT…DIIFVEWAKS (78 aa)).

This sequence belongs to the splicing factor SR family.

The protein localises to the nucleus. Its function is as follows. Has a role in pre-mRNA splicing where it is involved in spliceosome assembly. In Schizosaccharomyces pombe (strain 972 / ATCC 24843) (Fission yeast), this protein is Putative splicing factor C222.18.